A 311-amino-acid polypeptide reads, in one-letter code: Porphobilinogen deaminase (311 aa).

Cys-242 carries the S-(dipyrrolylmethanemethyl)cysteine modification.

This sequence belongs to the HMBS family. Monomer. It depends on dipyrromethane as a cofactor.

The catalysed reaction is 4 porphobilinogen + H2O = hydroxymethylbilane + 4 NH4(+). Its pathway is porphyrin-containing compound metabolism; protoporphyrin-IX biosynthesis; coproporphyrinogen-III from 5-aminolevulinate: step 2/4. Its function is as follows. Tetrapolymerization of the monopyrrole PBG into the hydroxymethylbilane pre-uroporphyrinogen in several discrete steps. This is Porphobilinogen deaminase from Hahella chejuensis (strain KCTC 2396).